Here is a 443-residue protein sequence, read N- to C-terminus: Thymidine phosphorylase (443 aa).

It belongs to the thymidine/pyrimidine-nucleoside phosphorylase family. As to quaternary structure, homodimer.

It catalyses the reaction thymidine + phosphate = 2-deoxy-alpha-D-ribose 1-phosphate + thymine. The protein operates within pyrimidine metabolism; dTMP biosynthesis via salvage pathway; dTMP from thymine: step 1/2. Its function is as follows. The enzymes which catalyze the reversible phosphorolysis of pyrimidine nucleosides are involved in the degradation of these compounds and in their utilization as carbon and energy sources, or in the rescue of pyrimidine bases for nucleotide synthesis. This Shewanella sp. (strain MR-7) protein is Thymidine phosphorylase.